The primary structure comprises 357 residues: Peptide chain release factor 1 (357 aa).

Glutamine 235 carries the N5-methylglutamine modification.

This sequence belongs to the prokaryotic/mitochondrial release factor family. Post-translationally, methylated by PrmC. Methylation increases the termination efficiency of RF1.

Its subcellular location is the cytoplasm. Functionally, peptide chain release factor 1 directs the termination of translation in response to the peptide chain termination codons UAG and UAA. This Alkaliphilus metalliredigens (strain QYMF) protein is Peptide chain release factor 1.